The primary structure comprises 277 residues: Acyl-coenzyme A thioesterase MBLAC2 (277 aa).

Positions 80, 82, 84, 85, 167, 186, and 228 each coordinate Zn(2+).

The protein belongs to the metallo-beta-lactamase superfamily. Glyoxalase II family. Requires Zn(2+) as cofactor.

The protein resides in the endoplasmic reticulum membrane. It localises to the cell membrane. It catalyses the reaction hexadecanoyl-CoA + H2O = hexadecanoate + CoA + H(+). The catalysed reaction is dodecanoyl-CoA + H2O = dodecanoate + CoA + H(+). The enzyme catalyses tetradecanoyl-CoA + H2O = tetradecanoate + CoA + H(+). It carries out the reaction octadecanoyl-CoA + H2O = octadecanoate + CoA + H(+). It catalyses the reaction a beta-lactam + H2O = a substituted beta-amino acid. Its function is as follows. Acyl-CoA thioesterases are a group of enzymes that catalyze the hydrolysis of acyl-CoAs to the free fatty acid and coenzyme A (CoASH), providing the potential to regulate intracellular levels of acyl-CoAs, free fatty acids and CoASH. Has an acyl-CoA thioesterase activity towards the long chain fatty acyl-CoA thioester palmitoyl-CoA (hexadecanoyl-CoA; C16:0-CoA). Displays a substrate preference for fatty acyl-CoAs with chain-lengths C12-C18. The protein is Acyl-coenzyme A thioesterase MBLAC2 (MBLAC2) of Gallus gallus (Chicken).